Reading from the N-terminus, the 115-residue chain is Thrombospondin type-1 domain-containing protein 8 (115 aa).

A signal peptide spans 1 to 21; it reads MARTPGALLLAPLLLLQLATP. The TSP type-1 domain maps to 53-104; that stretch reads DSILGPWGKWRCLCDLGKQERSREVVGTAPGPVFMDPEKLIQLRPCRQRDCP.

The sequence is that of Thrombospondin type-1 domain-containing protein 8 from Homo sapiens (Human).